We begin with the raw amino-acid sequence, 730 residues long: Rap1 GTPase-activating protein 2 (730 aa).

Phosphoserine; by PKG/PRKG1; in vitro is present on Ser-7. The disordered stretch occupies residues 32 to 53 (ANSSDATLPDRPLSPPLTAPPT). Ser-45 bears the Phosphoserine mark. Thr-49 carries the phosphothreonine modification. Residues 248 to 464 (IVSYDEHEVN…RTRAALLDNL (217 aa)) form the Rap-GAP domain. At Ser-507 the chain carries Phosphoserine. The segment at 509–533 (ETMVGGQKKSHSGGIPGSLSGGISH) is disordered. 5 positions are modified to phosphoserine: Ser-544, Ser-558, Ser-564, Ser-612, and Ser-613. The interval 552–730 (VKNQSRSPIK…LSHASSGAGH (179 aa)) is disordered. A compositionally biased stretch (polar residues) spans 585–613 (DSTSSTPKTPDGGHSSQEIKSETSSNPSS). Residues 618 to 631 (PNKEKPFMKLKENG) show a composition bias toward basic and acidic residues. Over residues 635–647 (SRSSSSTSSVSST) the composition is skewed to low complexity. Polar residues predominate over residues 661-670 (GSQPSTTSPF). Positions 678-687 (SPSPSSESPS) are enriched in low complexity. Polar residues predominate over residues 699-712 (RSPTDAKSRNSPRS).

In vitro phosphorylated by cGMP-dependent protein kinase 1 (cGKI) at Ser-7; the phosphorylation probably does not regulate GAP activity. As to expression, isoform 1 and isoform 2 are expressed in platelets with isoform 2 being the predominant form. Expressed in lymphocytes, heart, testis and pancreas.

The protein resides in the cytoplasm. It localises to the perinuclear region. Its function is as follows. GTPase activator for the nuclear Ras-related regulatory protein RAP-1A (KREV-1), converting it to the putatively inactive GDP-bound state. In Homo sapiens (Human), this protein is Rap1 GTPase-activating protein 2 (RAP1GAP2).